A 616-amino-acid polypeptide reads, in one-letter code: Chaperone protein HscA (616 aa).

This sequence belongs to the heat shock protein 70 family.

Functionally, chaperone involved in the maturation of iron-sulfur cluster-containing proteins. Has a low intrinsic ATPase activity which is markedly stimulated by HscB. Involved in the maturation of IscU. This Cronobacter sakazakii (strain ATCC BAA-894) (Enterobacter sakazakii) protein is Chaperone protein HscA.